The following is a 74-amino-acid chain: ATP synthase subunit c (74 aa).

Transmembrane regions (helical) follow at residues 5–25 (LAHI…IGVG) and 49–69 (LFIG…VALL).

Belongs to the ATPase C chain family. F-type ATPases have 2 components, F(1) - the catalytic core - and F(0) - the membrane proton channel. F(1) has five subunits: alpha(3), beta(3), gamma(1), delta(1), epsilon(1). F(0) has four main subunits: a(1), b(1), b'(1) and c(10-14). The alpha and beta chains form an alternating ring which encloses part of the gamma chain. F(1) is attached to F(0) by a central stalk formed by the gamma and epsilon chains, while a peripheral stalk is formed by the delta, b and b' chains.

It localises to the cell inner membrane. F(1)F(0) ATP synthase produces ATP from ADP in the presence of a proton or sodium gradient. F-type ATPases consist of two structural domains, F(1) containing the extramembraneous catalytic core and F(0) containing the membrane proton channel, linked together by a central stalk and a peripheral stalk. During catalysis, ATP synthesis in the catalytic domain of F(1) is coupled via a rotary mechanism of the central stalk subunits to proton translocation. Its function is as follows. Key component of the F(0) channel; it plays a direct role in translocation across the membrane. A homomeric c-ring of between 10-14 subunits forms the central stalk rotor element with the F(1) delta and epsilon subunits. This is ATP synthase subunit c from Roseobacter denitrificans (strain ATCC 33942 / OCh 114) (Erythrobacter sp. (strain OCh 114)).